Reading from the N-terminus, the 788-residue chain is Diacylglycerol kinase gamma (788 aa).

The span at 83-93 (PRQETPDHPKE) shows a compositional bias: basic and acidic residues. Residues 83–150 (PRQETPDHPK…WGEPNAPASS (68 aa)) are disordered. The span at 95 to 109 (ASSSEPNVSDSNAES) shows a compositional bias: polar residues. EF-hand domains follow at residues 172–207 (RPQD…MLHV) and 217–252 (ELRP…TIPL). D185, D187, N189, E196, D230, N232, D234, and E241 together coordinate Ca(2+). 2 Phorbol-ester/DAG-type zinc fingers span residues 268–318 (RHAW…IPGC) and 333–380 (QHAW…STAC). The DAGKc domain maps to 427-561 (PGTHPLLVLV…LDRWYLEVMP (135 aa)). Positions 768–788 (MMGPPQKSSFFSLRRKSRSKD) are disordered.

The protein belongs to the eukaryotic diacylglycerol kinase family. Expressed specifically in brain. Highly expressed in cerebellar Purkinje cells (at protein level).

It is found in the membrane. The protein localises to the cytoplasm. It localises to the cytosol. Its subcellular location is the cytoskeleton. The catalysed reaction is a 1,2-diacyl-sn-glycerol + ATP = a 1,2-diacyl-sn-glycero-3-phosphate + ADP + H(+). The enzyme catalyses 1,2-didecanoyl-sn-glycerol + ATP = 1,2-didecanoyl-sn-glycero-3-phosphate + ADP + H(+). It catalyses the reaction 1,2-di-(9Z-octadecenoyl)-sn-glycerol + ATP = 1,2-di-(9Z-octadecenoyl)-sn-glycero-3-phosphate + ADP + H(+). It carries out the reaction 1-octadecanoyl-2-(9Z,12Z)-octadecadienoyl-sn-glycerol + ATP = 1-octadecanoyl-2-(9Z,12Z-octadecadienoyl)-sn-glycero-3-phosphate + ADP + H(+). The catalysed reaction is 1-octadecanoyl-2-(5Z,8Z,11Z,14Z-eicosatetraenoyl)-sn-glycerol + ATP = 1-octadecanoyl-2-(5Z,8Z,11Z,14Z-eicosatetraenoyl)-sn-glycero-3-phosphate + ADP + H(+). Its pathway is lipid metabolism; glycerolipid metabolism. With respect to regulation, the activity is calcium-dependent. Requires phosphatidylserine for maximal activity. Diacylglycerol kinase that converts diacylglycerol/DAG into phosphatidic acid/phosphatidate/PA and regulates the respective levels of these two bioactive lipids. Thereby, acts as a central switch between the signaling pathways activated by these second messengers with different cellular targets and opposite effects in numerous biological processes. Has no apparent specificity with regard to the acyl compositions of diacylglycerol. Specifically expressed in the cerebellum where it controls the level of diacylglycerol which in turn regulates the activity of protein kinase C gamma. Through protein kinase C gamma, indirectly regulates the dendritic development of Purkinje cells, cerebellar long term depression and ultimately cerebellar motor coordination. This Rattus norvegicus (Rat) protein is Diacylglycerol kinase gamma (Dgkg).